The primary structure comprises 394 residues: MAMPYASLSPAVADHRSSPAAATASLLPFCRSTPLSAGGGGVAMGEDAPMTARWPPAAAARLPPFTAAQYEELEQQALIYKYLVAGVPVPPDLVLPIRRGLDSLAARFYNHPALGYGPYFGKKLDPEPGRCRRTDGKKWRCSKEAAPDSKYCERHMHRGRNRSRKPVETQLVAQSQPPSSVVGSAAAPLAAASNGSSFQNHSLYPAIAGSNGGGGGRNMPSSFGSALGSQLHMDNAAPYAAVGGGTGKDLRYTAYGTRSLADEQSQLITEAINTSIENPWRLLPSQNSPFPLSSYSQLGALSDLGQNTPSSLSKVQRQPLSFFGNDYAAVDSVKQENQTLRPFFDEWPKGRDSWSDLADENANLSSFSGTQLSISIPMASSDFSAASSRSTNGD.

The 36-residue stretch at 64–99 folds into the QLQ domain; sequence PFTAAQYEELEQQALIYKYLVAGVPVPPDLVLPIRR. One can recognise a WRC domain in the interval 125–169; sequence DPEPGRCRRTDGKKWRCSKEAAPDSKYCERHMHRGRNRSRKPVET. 2 consecutive short sequence motifs (bipartite nuclear localization signal) follow at residues 130–140 and 158–165; these read RCRRTDGKKWR and RGRNRSRK. The segment at 156-180 is disordered; that stretch reads MHRGRNRSRKPVETQLVAQSQPPSS. Positions 170–180 are enriched in low complexity; that stretch reads QLVAQSQPPSS.

Belongs to the GRF family. As to quaternary structure, interacts with GIF1. Interacts with GSK2. Expressed in stems. Expressed in panicles.

It is found in the nucleus. With respect to regulation, transactivation activity is repressed by GSK2. Transcription activator that plays a role in the regulation of meristematic function in leaves, stems and inflorescences. Transcription activator that plays a regulatory role in grain development. Positively regulates grain size by promoting cell division and expansion, leading to increased grain length and width. Positively regulates the expression of genes promoting cell proliferation. Activates the expression of expansin genes to promote cell expansion and grain size. May promote grain size by activating brassinosteroid responses. Component of a network formed by the microRNA396 (miRNA396), the GRFs and their interacting factors (GIFs) acting in the regulation of meristem function, at least partially through the control of cell proliferation. Component of the miRNA396c-GRF4-GIF1 regulatory module that plays an important role in grain size determination. This chain is Growth-regulating factor 4, found in Oryza sativa subsp. japonica (Rice).